A 55-amino-acid chain; its full sequence is MPQLSPMNGLLIMFSVTLMLLIVLVINHFMLTPMASPLLASHLKTKKSGGEKLYY.

A helical membrane pass occupies residues 11–31; the sequence is LIMFSVTLMLLIVLVINHFML.

The protein belongs to the ATPase protein 8 family. As to quaternary structure, F-type ATPases have 2 components, CF(1) - the catalytic core - and CF(0) - the membrane proton channel.

It localises to the mitochondrion membrane. Mitochondrial membrane ATP synthase (F(1)F(0) ATP synthase or Complex V) produces ATP from ADP in the presence of a proton gradient across the membrane which is generated by electron transport complexes of the respiratory chain. F-type ATPases consist of two structural domains, F(1) - containing the extramembraneous catalytic core and F(0) - containing the membrane proton channel, linked together by a central stalk and a peripheral stalk. During catalysis, ATP synthesis in the catalytic domain of F(1) is coupled via a rotary mechanism of the central stalk subunits to proton translocation. Part of the complex F(0) domain. Minor subunit located with subunit a in the membrane. The chain is ATP synthase protein 8 (MT-ATP8) from Albinaria caerulea (Land snail).